The sequence spans 123 residues: Large ribosomal subunit protein bL19 (123 aa).

The protein belongs to the bacterial ribosomal protein bL19 family.

In terms of biological role, this protein is located at the 30S-50S ribosomal subunit interface and may play a role in the structure and function of the aminoacyl-tRNA binding site. The chain is Large ribosomal subunit protein bL19 from Ruegeria sp. (strain TM1040) (Silicibacter sp.).